Reading from the N-terminus, the 1413-residue chain is DNA-directed RNA polymerase subunit beta' (1413 aa).

Residues cysteine 70, cysteine 72, cysteine 85, and cysteine 88 each contribute to the Zn(2+) site. Positions 461, 463, and 465 each coordinate Mg(2+). Zn(2+)-binding residues include cysteine 820, cysteine 894, cysteine 901, and cysteine 904.

The protein belongs to the RNA polymerase beta' chain family. In terms of assembly, the RNAP catalytic core consists of 2 alpha, 1 beta, 1 beta' and 1 omega subunit. When a sigma factor is associated with the core the holoenzyme is formed, which can initiate transcription. Mg(2+) serves as cofactor. It depends on Zn(2+) as a cofactor.

It carries out the reaction RNA(n) + a ribonucleoside 5'-triphosphate = RNA(n+1) + diphosphate. Functionally, DNA-dependent RNA polymerase catalyzes the transcription of DNA into RNA using the four ribonucleoside triphosphates as substrates. The chain is DNA-directed RNA polymerase subunit beta' from Cupriavidus metallidurans (strain ATCC 43123 / DSM 2839 / NBRC 102507 / CH34) (Ralstonia metallidurans).